A 693-amino-acid chain; its full sequence is Subtilisin-like protease SBT4.10 (693 aa).

The signal sequence occupies residues 1 to 25; that stretch reads MAKLREASFCALACVLVLFLSFVSA. The propeptide at 26-113 is activation peptide; the sequence is DTYNRQDKQV…VFPSKKYKLH (88 aa). An Inhibitor I9 domain is found at 35–113; it reads VYVVYMGSLP…VFPSKKYKLH (79 aa). The Peptidase S8 domain maps to 117–536; that stretch reads SWDFMGLKEG…SGHIDPIAAI (420 aa). Catalysis depends on Asp-145, which acts as the Charge relay system. Asn-176 carries an N-linked (GlcNAc...) asparagine glycan. The active-site Charge relay system is the His-200. N-linked (GlcNAc...) asparagine glycosylation is found at Asn-215, Asn-223, Asn-368, Asn-413, and Asn-467. Positions 354–396 constitute a PA domain; the sequence is QYPLVYETSVEKCNNESLTTLALSFLTLTPQSNEQIISMFHTL. The active-site Charge relay system is the Ser-475. N-linked (GlcNAc...) asparagine glycosylation is found at Asn-559, Asn-603, and Asn-613.

This sequence belongs to the peptidase S8 family. Post-translationally, the C-terminal propeptide is autocleaved.

It localises to the secreted. This Arabidopsis thaliana (Mouse-ear cress) protein is Subtilisin-like protease SBT4.10.